A 676-amino-acid polypeptide reads, in one-letter code: DNA ligase (676 aa).

NAD(+)-binding positions include 34-38, 84-85, and glutamate 116; these read DAEYD and SL. Lysine 118 (N6-AMP-lysine intermediate) is an active-site residue. Positions 139, 174, 294, and 318 each coordinate NAD(+). Zn(2+) is bound by residues cysteine 412, cysteine 415, cysteine 428, and cysteine 433. The region spanning 589–676 is the BRCT domain; sequence KGGEALKGLT…RTGKKAEELV (88 aa).

The protein belongs to the NAD-dependent DNA ligase family. LigA subfamily. Mg(2+) is required as a cofactor. Mn(2+) serves as cofactor.

The enzyme catalyses NAD(+) + (deoxyribonucleotide)n-3'-hydroxyl + 5'-phospho-(deoxyribonucleotide)m = (deoxyribonucleotide)n+m + AMP + beta-nicotinamide D-nucleotide.. Its function is as follows. DNA ligase that catalyzes the formation of phosphodiester linkages between 5'-phosphoryl and 3'-hydroxyl groups in double-stranded DNA using NAD as a coenzyme and as the energy source for the reaction. It is essential for DNA replication and repair of damaged DNA. The sequence is that of DNA ligase from Thermus thermophilus (strain ATCC BAA-163 / DSM 7039 / HB27).